We begin with the raw amino-acid sequence, 384 residues long: Deoxyguanosinetriphosphate triphosphohydrolase-like protein (384 aa).

A disordered region spans residues 13–42 (LASYASDPSKTRGRRHSEPPPENRTEFQRD). Basic and acidic residues predominate over residues 28–42 (HSEPPPENRTEFQRD). Positions 73–208 (RLTHSLEVAQ…ANLADEVAYN (136 aa)) constitute an HD domain.

It belongs to the dGTPase family. Type 2 subfamily.

The sequence is that of Deoxyguanosinetriphosphate triphosphohydrolase-like protein from Bordetella bronchiseptica (strain ATCC BAA-588 / NCTC 13252 / RB50) (Alcaligenes bronchisepticus).